The chain runs to 490 residues: Probable cytosol aminopeptidase (490 aa).

Residues K257 and D262 each contribute to the Mn(2+) site. K269 is a catalytic residue. D281, D341, and E343 together coordinate Mn(2+). R345 is an active-site residue.

It belongs to the peptidase M17 family. Mn(2+) serves as cofactor.

The protein localises to the cytoplasm. The enzyme catalyses Release of an N-terminal amino acid, Xaa-|-Yaa-, in which Xaa is preferably Leu, but may be other amino acids including Pro although not Arg or Lys, and Yaa may be Pro. Amino acid amides and methyl esters are also readily hydrolyzed, but rates on arylamides are exceedingly low.. It catalyses the reaction Release of an N-terminal amino acid, preferentially leucine, but not glutamic or aspartic acids.. Presumably involved in the processing and regular turnover of intracellular proteins. Catalyzes the removal of unsubstituted N-terminal amino acids from various peptides. This Prochlorococcus marinus (strain MIT 9215) protein is Probable cytosol aminopeptidase.